We begin with the raw amino-acid sequence, 264 residues long: Acyl-[acyl-carrier-protein]--UDP-N-acetylglucosamine O-acyltransferase (264 aa).

It belongs to the transferase hexapeptide repeat family. LpxA subfamily. As to quaternary structure, homotrimer.

Its subcellular location is the cytoplasm. The enzyme catalyses a (3R)-hydroxyacyl-[ACP] + UDP-N-acetyl-alpha-D-glucosamine = a UDP-3-O-[(3R)-3-hydroxyacyl]-N-acetyl-alpha-D-glucosamine + holo-[ACP]. The protein operates within glycolipid biosynthesis; lipid IV(A) biosynthesis; lipid IV(A) from (3R)-3-hydroxytetradecanoyl-[acyl-carrier-protein] and UDP-N-acetyl-alpha-D-glucosamine: step 1/6. In terms of biological role, involved in the biosynthesis of lipid A, a phosphorylated glycolipid that anchors the lipopolysaccharide to the outer membrane of the cell. The chain is Acyl-[acyl-carrier-protein]--UDP-N-acetylglucosamine O-acyltransferase from Haemophilus ducreyi (strain 35000HP / ATCC 700724).